Here is a 346-residue protein sequence, read N- to C-terminus: Holliday junction branch migration complex subunit RuvB (346 aa).

Positions 1–182 (MKIELLNTPA…FGISSRFDYY (182 aa)) are large ATPase domain (RuvB-L). Residues Ile-21, Arg-22, Gly-63, Lys-66, Thr-67, Thr-68, 129–131 (EDF), Arg-172, Tyr-182, and Arg-219 each bind ATP. Thr-67 serves as a coordination point for Mg(2+). Positions 183-253 (PPELLERIIL…IAMTTLASLE (71 aa)) are small ATPAse domain (RuvB-S). Residues 256-346 (EEGLDDMDKK…GPLFDAAPAR (91 aa)) are head domain (RuvB-H). The DNA site is built by Arg-311 and Arg-316.

It belongs to the RuvB family. As to quaternary structure, homohexamer. Forms an RuvA(8)-RuvB(12)-Holliday junction (HJ) complex. HJ DNA is sandwiched between 2 RuvA tetramers; dsDNA enters through RuvA and exits via RuvB. An RuvB hexamer assembles on each DNA strand where it exits the tetramer. Each RuvB hexamer is contacted by two RuvA subunits (via domain III) on 2 adjacent RuvB subunits; this complex drives branch migration. In the full resolvosome a probable DNA-RuvA(4)-RuvB(12)-RuvC(2) complex forms which resolves the HJ.

Its subcellular location is the cytoplasm. It carries out the reaction ATP + H2O = ADP + phosphate + H(+). In terms of biological role, the RuvA-RuvB-RuvC complex processes Holliday junction (HJ) DNA during genetic recombination and DNA repair, while the RuvA-RuvB complex plays an important role in the rescue of blocked DNA replication forks via replication fork reversal (RFR). RuvA specifically binds to HJ cruciform DNA, conferring on it an open structure. The RuvB hexamer acts as an ATP-dependent pump, pulling dsDNA into and through the RuvAB complex. RuvB forms 2 homohexamers on either side of HJ DNA bound by 1 or 2 RuvA tetramers; 4 subunits per hexamer contact DNA at a time. Coordinated motions by a converter formed by DNA-disengaged RuvB subunits stimulates ATP hydrolysis and nucleotide exchange. Immobilization of the converter enables RuvB to convert the ATP-contained energy into a lever motion, pulling 2 nucleotides of DNA out of the RuvA tetramer per ATP hydrolyzed, thus driving DNA branch migration. The RuvB motors rotate together with the DNA substrate, which together with the progressing nucleotide cycle form the mechanistic basis for DNA recombination by continuous HJ branch migration. Branch migration allows RuvC to scan DNA until it finds its consensus sequence, where it cleaves and resolves cruciform DNA. The sequence is that of Holliday junction branch migration complex subunit RuvB from Chlorobium phaeobacteroides (strain DSM 266 / SMG 266 / 2430).